We begin with the raw amino-acid sequence, 94 residues long: Large ribosomal subunit protein uL23 (94 aa).

Belongs to the universal ribosomal protein uL23 family. Part of the 50S ribosomal subunit. Contacts protein L29, and trigger factor when it is bound to the ribosome.

In terms of biological role, one of the early assembly proteins it binds 23S rRNA. One of the proteins that surrounds the polypeptide exit tunnel on the outside of the ribosome. Forms the main docking site for trigger factor binding to the ribosome. This is Large ribosomal subunit protein uL23 from Mycoplasma mycoides subsp. mycoides SC (strain CCUG 32753 / NCTC 10114 / PG1).